The primary structure comprises 412 residues: MAADFAASVILDTALSVSGLTDYLRLLLEHDEQLRQVWVVGEVSSTNHHRSGLFFTLQDPDGSAAIKCVVWSSQVPKLAQLPVAGEQLIVLGSIRLYPQRGEYQLSVWQAVPAGVGLQALRYQQLKNRLLAEGLFDPQRKRSLPIHPQTIAVVTSPTAAAWGDIQKTLKHRYPGLHVLFSPATVQGEQAPESIVKAIARVEKDGRAEVLILSRGGGAVEELACFNDERVVRAVAECSIPVVTGIGHQRDESLVDLVADVCVHTPTAAAEKVVPSLAELSNQHRQRIIALHQVLLHTQTSAENQLQTLRNRLQNLRLDRHLQQEAQKLNWQRQRLLQLTMGRSQQAKQHLELLRQKLISLDPKSVLQRGYAVVRQENGAIARSADELAVGNELFIQLAQGEVKAKVIEVEQRQ.

It belongs to the XseA family. In terms of assembly, heterooligomer composed of large and small subunits.

The protein localises to the cytoplasm. It carries out the reaction Exonucleolytic cleavage in either 5'- to 3'- or 3'- to 5'-direction to yield nucleoside 5'-phosphates.. In terms of biological role, bidirectionally degrades single-stranded DNA into large acid-insoluble oligonucleotides, which are then degraded further into small acid-soluble oligonucleotides. This is Exodeoxyribonuclease 7 large subunit from Nostoc sp. (strain PCC 7120 / SAG 25.82 / UTEX 2576).